The sequence spans 810 residues: DNA gyrase subunit A (810 aa).

In terms of domain architecture, Topo IIA-type catalytic spans 36-502 (LPDVRDGLKP…EVLKTSMSDL (467 aa)). The active-site O-(5'-phospho-DNA)-tyrosine intermediate is tyrosine 124. The tract at residues 499–810 (MSDLMQKENI…SLVSVSKFIK (312 aa)) is C-terminal domain. Positions 529–535 (QGTGGKG) match the GyrA-box motif.

The protein belongs to the type II topoisomerase GyrA/ParC subunit family. Heterotetramer, composed of two GyrA and two GyrB chains. In the heterotetramer, GyrA contains the active site tyrosine that forms a transient covalent intermediate with DNA, while GyrB binds cofactors and catalyzes ATP hydrolysis.

The protein resides in the cytoplasm. It catalyses the reaction ATP-dependent breakage, passage and rejoining of double-stranded DNA.. Its function is as follows. A type II topoisomerase that negatively supercoils closed circular double-stranded (ds) DNA in an ATP-dependent manner to modulate DNA topology and maintain chromosomes in an underwound state. Negative supercoiling favors strand separation, and DNA replication, transcription, recombination and repair, all of which involve strand separation. Also able to catalyze the interconversion of other topological isomers of dsDNA rings, including catenanes and knotted rings. Type II topoisomerases break and join 2 DNA strands simultaneously in an ATP-dependent manner. This Borreliella burgdorferi (strain ATCC 35210 / DSM 4680 / CIP 102532 / B31) (Borrelia burgdorferi) protein is DNA gyrase subunit A.